A 259-amino-acid chain; its full sequence is UPF0246 protein Rfer_2372 (259 aa).

The protein belongs to the UPF0246 family.

This is UPF0246 protein Rfer_2372 from Albidiferax ferrireducens (strain ATCC BAA-621 / DSM 15236 / T118) (Rhodoferax ferrireducens).